Here is a 210-residue protein sequence, read N- to C-terminus: Large ribosomal subunit protein uL16 (210 aa).

The protein belongs to the universal ribosomal protein uL16 family. In terms of assembly, component of the large ribosomal subunit. Mature ribosomes consist of a small (40S) and a large (60S) subunit. The 40S subunit contains about 33 different proteins and 1 molecule of RNA (18S). The 60S subunit contains about 49 different proteins and 3 molecules of RNA (28S, 5.8S and 5S).

The protein localises to the cytoplasm. Its function is as follows. Component of the large ribosomal subunit. Plays a role in the formation of actively translating ribosomes. (Microbial infection) Seems to bind to the leucine zipper of viral and cellular JUN. This chain is Large ribosomal subunit protein uL16, found in Gallus gallus (Chicken).